The sequence spans 147 residues: Protein phosphatase 1 regulatory subunit 14A (147 aa).

Residues 1–11 (MAAQRLGKRVL) show a composition bias toward basic residues. Residues 1–37 (MAAQRLGKRVLSKLQSPSRARGPGGSPSGLQKRHARV) are disordered. S26 bears the Phosphoserine mark. Residues 35–120 (ARVTVKYDRR…LLAKLRGLHK (86 aa)) form an inhibitory region. A Phosphothreonine modification is found at T38. Positions 118–147 (LHKQPGFPQPSPSDDPSLSPRQDPAHTAPP) are disordered. A phosphoserine mark is found at S128, S134, and S136.

This sequence belongs to the PP1 inhibitor family.

It is found in the cytoplasm. In terms of biological role, inhibitor of PPP1CA. Has over 1000-fold higher inhibitory activity when phosphorylated, creating a molecular switch for regulating the phosphorylation status of PPP1CA substrates and smooth muscle contraction. The sequence is that of Protein phosphatase 1 regulatory subunit 14A (Ppp1r14a) from Rattus norvegicus (Rat).